Reading from the N-terminus, the 930-residue chain is Translation initiation factor IF-2 (930 aa).

A disordered region spans residues 27 to 342; the sequence is LGLDVKSHSS…APKPVTERKF (316 aa). The span at 52 to 103 shows a compositional bias: low complexity; the sequence is KAAAPQAPAEKPVAAQPSPQKTPAKEAAPVKAEPTEAKAAAQPEAKTETAAP. 2 stretches are compositionally biased toward basic and acidic residues: residues 112 to 128 and 136 to 178; these read FKAE…ERRK and QNKE…DGRR. Residues 183–195 show a composition bias toward polar residues; it reads HQGFNGQKRQQPQ. Residues 218–245 show a composition bias toward basic and acidic residues; that stretch reads RSSEERFKQAQEAKEVMERQNRRKEQPK. Over residues 251-268 the composition is skewed to pro residues; that stretch reads PVQPAPAPSAPAANPSPA. Over residues 280–297 the composition is skewed to basic and acidic residues; that stretch reads ARPDKKRDDFDREEEGPR. The span at 302 to 318 shows a compositional bias: low complexity; it reads NRSSQNQVRNQRNSNWN. One can recognise a tr-type G domain in the interval 432–599; sequence ERPPVVTIMG…TVLLVAEIQE (168 aa). The interval 441–448 is G1; sequence GHVDHGKT. 441–448 lines the GTP pocket; that stretch reads GHVDHGKT. The interval 466–470 is G2; it reads GITQH. Positions 487 to 490 are G3; the sequence is DTPG. GTP is bound by residues 487–491 and 541–544; these read DTPGH and NKID. A G4 region spans residues 541–544; sequence NKID. Residues 577–579 form a G5 region; that stretch reads SAK.

Belongs to the TRAFAC class translation factor GTPase superfamily. Classic translation factor GTPase family. IF-2 subfamily.

Its subcellular location is the cytoplasm. Its function is as follows. One of the essential components for the initiation of protein synthesis. Protects formylmethionyl-tRNA from spontaneous hydrolysis and promotes its binding to the 30S ribosomal subunits. Also involved in the hydrolysis of GTP during the formation of the 70S ribosomal complex. This is Translation initiation factor IF-2 from Streptococcus sanguinis (strain SK36).